The primary structure comprises 498 residues: Probable FAD-binding monooxygenase AlmA (498 aa).

The chain crosses the membrane as a helical span at residues 4–24 (HIDILIVGAGISGIGIAAHLS). Residues Ser-15, Glu-36, Asp-56, Phe-62, and Val-104 each coordinate FAD. 54 to 56 (RSD) contacts NADP(+). Residues 184 to 190 (SGATAIT), 208 to 209 (RS), and 292 to 293 (RL) each bind NADP(+). Val-395 is an FAD binding site.

It belongs to the FAD-binding monooxygenase family. The cofactor is FAD.

Its subcellular location is the cell membrane. It participates in hydrocarbon metabolism; alkane degradation. Its function is as follows. Is able to catalyze the degradation of n-alkanes with C chain lengths of 32 and 36. Probably allows Acinetobacter baylyi strain ADP1 to grow on the long-chain n-alkane dotriacontane (C32H66) as a sole carbon source. The polypeptide is Probable FAD-binding monooxygenase AlmA (Acinetobacter baylyi (strain ATCC 33305 / BD413 / ADP1)).